A 296-amino-acid polypeptide reads, in one-letter code: MNDTVEKSIERAKVLIESLPYMQEFRHKTIVIKYGGHAMVDEALKKQFALDVILLKQIGINPIIVHGGGPQINNLLDRLDIKPSYVQGMRVTDGETMDVVEMVLVGKVNKEIVGLINHCGGKAVGLSGRDGDLVCAEQLQMNQAQVGDNPPELIDVGRVGQVTKINSHVLETLSQDDFIPIIAPVGVGEDGRAFNINADLVASAIAAELSAEKLILLTDVPGVKNKAGDLLTTLEWQELNGLIEDGTIMGGMIPKVRCCEDAVKGGVAKTYIVDGRVEHAILLEIFTRDGVGTEIY.

Substrate contacts are provided by residues 68–69 (GG), arginine 90, and asparagine 195.

It belongs to the acetylglutamate kinase family. ArgB subfamily.

It localises to the cytoplasm. It carries out the reaction N-acetyl-L-glutamate + ATP = N-acetyl-L-glutamyl 5-phosphate + ADP. It functions in the pathway amino-acid biosynthesis; L-arginine biosynthesis; N(2)-acetyl-L-ornithine from L-glutamate: step 2/4. In terms of biological role, catalyzes the ATP-dependent phosphorylation of N-acetyl-L-glutamate. The protein is Acetylglutamate kinase of Desulfotalea psychrophila (strain LSv54 / DSM 12343).